We begin with the raw amino-acid sequence, 190 residues long: Imidazoleglycerol-phosphate dehydratase (190 aa).

This sequence belongs to the imidazoleglycerol-phosphate dehydratase family.

It is found in the cytoplasm. The enzyme catalyses D-erythro-1-(imidazol-4-yl)glycerol 3-phosphate = 3-(imidazol-4-yl)-2-oxopropyl phosphate + H2O. It functions in the pathway amino-acid biosynthesis; L-histidine biosynthesis; L-histidine from 5-phospho-alpha-D-ribose 1-diphosphate: step 6/9. This chain is Imidazoleglycerol-phosphate dehydratase, found in Methanococcus maripaludis (strain DSM 14266 / JCM 13030 / NBRC 101832 / S2 / LL).